A 359-amino-acid chain; its full sequence is 5-amino-6-(D-ribitylamino)uracil--L-tyrosine 4-hydroxyphenyl transferase 1 (359 aa).

A Radical SAM core domain is found at 45-282 (VTYVVNANIN…VYAISRIFFK (238 aa)). Positions 59, 63, and 66 each coordinate [4Fe-4S] cluster.

It belongs to the radical SAM superfamily. CofH family. Consists of two subunits, CofG and CofH. Requires [4Fe-4S] cluster as cofactor.

The catalysed reaction is 5-amino-6-(D-ribitylamino)uracil + L-tyrosine + S-adenosyl-L-methionine = 5-amino-5-(4-hydroxybenzyl)-6-(D-ribitylimino)-5,6-dihydrouracil + 2-iminoacetate + 5'-deoxyadenosine + L-methionine + H(+). The protein operates within cofactor biosynthesis; coenzyme F0 biosynthesis. Catalyzes the radical-mediated synthesis of 5-amino-5-(4-hydroxybenzyl)-6-(D-ribitylimino)-5,6-dihydrouracil from 5-amino-6-(D-ribitylamino)uracil and L-tyrosine. In Methanococcus maripaludis (strain DSM 14266 / JCM 13030 / NBRC 101832 / S2 / LL), this protein is 5-amino-6-(D-ribitylamino)uracil--L-tyrosine 4-hydroxyphenyl transferase 1.